A 438-amino-acid polypeptide reads, in one-letter code: Transposon Ty2-GR1 Gag polyprotein (438 aa).

Composition is skewed to polar residues over residues 1–11, 19–39, and 49–60; these read MESQQLHQNPH, ASVT…SASN, and KVNSQQETTPGT. 3 disordered regions span residues 1–86, 360–403, and 418–438; these read MESQ…GQYQ, HSEY…ATSS, and VSSQ…TERI. Residues 295–397 form an RNA-binding region; sequence ENNINVSDRL…SSKPRAAKAH (103 aa). The span at 369-381 shows a compositional bias: low complexity; the sequence is TSPNTTNTKVTTR.

Homotrimer.

The protein localises to the cytoplasm. Capsid protein (CA) is the structural component of the virus-like particle (VLP), forming the shell that encapsulates the retrotransposons dimeric RNA genome. The particles are assembled from trimer-clustered units and there are holes in the capsid shells that allow for the diffusion of macromolecules. CA also has nucleocapsid-like chaperone activity, promoting primer tRNA(i)-Met annealing to the multipartite primer-binding site (PBS), dimerization of Ty2 RNA and initiation of reverse transcription. This chain is Transposon Ty2-GR1 Gag polyprotein (TY2A-GR1), found in Saccharomyces cerevisiae (strain ATCC 204508 / S288c) (Baker's yeast).